The primary structure comprises 662 residues: Intracellular exo-alpha-(1-&gt;5)-L-arabinofuranosidase (662 aa).

Alpha-L-arabinofuranose is bound by residues E27, N72, and N174. The active-site Proton donor/acceptor is E175. Alpha-L-arabinofuranose contacts are provided by Y246, E294, and Q352. E294 (nucleophile) is an active-site residue. Disordered regions lie at residues 454 to 483, 497 to 548, and 588 to 662; these read LADA…SLRD, SIRC…RTAR, and WTRW…ARRC. The segment covering 519-533 has biased composition (low complexity); that stretch reads TGTPPAAPPSSSSAP. The segment covering 537-547 has biased composition (basic and acidic residues); that stretch reads PTARRSPDRTA. 3 stretches are compositionally biased toward low complexity: residues 590–603, 628–641, and 649–662; these read RWAP…PSRR, RRSP…TPAP, and AGAS…ARRC.

The protein belongs to the glycosyl hydrolase 51 family. As to quaternary structure, homohexamer; trimer of dimers.

It is found in the cytoplasm. It carries out the reaction Hydrolysis of terminal non-reducing alpha-L-arabinofuranoside residues in alpha-L-arabinosides.. It functions in the pathway glycan metabolism; L-arabinan degradation. Functionally, involved in the degradation of arabinan and is a key enzyme in the complete degradation of the plant cell wall. Catalyzes the cleavage of terminal alpha-(1-&gt;5)-arabinofuranosyl bonds in different hemicellulosic homopolysaccharides (arabino-oligoxylosides, branched and debranched arabinans). It acts rapidly on the short-chain arabino-oligoxylosides from digestion of xylan with xylanases. It hydrolyzes slowly arabinan and arabinoxylan from wheat and rye flour. The sequence is that of Intracellular exo-alpha-(1-&gt;5)-L-arabinofuranosidase from Streptomyces lividans.